The chain runs to 341 residues: MTKPSVGINGFGRIGRLVLRAAVEKDSVNVVAVNDPFISIDYMVYLFQYDSTHGRFKGTVAHEGDYLLVAKEGKSQHKIKVYNSRDPAEIQWGASGADYVVESTGVFTTIEKANAHLKGGAKKVIISAPSADAPMFVVGVNHEKYDHANDHIISNASCTTNCLAPLAKVINDNFGIIEGLMTTVHAVTATQKTVDGPSGKLWRDGRGAGQNIIPASTGAAKAVGKVIPELNGKLTGMAFRVPTPDVSVVDLTARLEKPASLDDIKKVIKAAADGPMKGILAYTEDQVVSTDFVSDTNSSIFDAGASISLNPHFVKLVSWYDNEFGYSNRVVDLISYIATKA.

NAD(+) contacts are provided by residues 13–14, aspartate 35, and arginine 85; that span reads RI. D-glyceraldehyde 3-phosphate is bound by residues 157–159, threonine 188, 217–218, and arginine 240; these read SCT and TG. The active-site Nucleophile is cysteine 158. Asparagine 322 is an NAD(+) binding site.

It belongs to the glyceraldehyde-3-phosphate dehydrogenase family. As to quaternary structure, homotetramer.

The protein localises to the cytoplasm. It carries out the reaction D-glyceraldehyde 3-phosphate + phosphate + NAD(+) = (2R)-3-phospho-glyceroyl phosphate + NADH + H(+). It functions in the pathway carbohydrate degradation; glycolysis; pyruvate from D-glyceraldehyde 3-phosphate: step 1/5. The polypeptide is Glyceraldehyde-3-phosphate dehydrogenase 3 (gpd-3) (Caenorhabditis elegans).